We begin with the raw amino-acid sequence, 250 residues long: L-ascorbate peroxidase 1, cytosolic (250 aa).

The active-site Proton acceptor is H42. The tract at residues 113 to 137 (VPFHPGREDKPAPPPEGRLPDATKG) is disordered. H163 provides a ligand contact to heme b. T164, T180, N182, and D187 together coordinate K(+).

This sequence belongs to the peroxidase family. Ascorbate peroxidase subfamily. The cofactor is heme b. As to expression, expressed in roots, aerial vegetative parts and reproductive organs. Expressed in roots, leaves, stems and flowers.

The protein resides in the cytoplasm. The enzyme catalyses L-ascorbate + H2O2 = L-dehydroascorbate + 2 H2O. Its activity is regulated as follows. Inhibited by p-chloromercuriphenylsulfonic acid (CMPSA). In terms of biological role, plays a key role in hydrogen peroxide removal. This chain is L-ascorbate peroxidase 1, cytosolic, found in Oryza sativa subsp. japonica (Rice).